Consider the following 100-residue polypeptide: Small ribosomal subunit protein bS18c (100 aa).

The protein belongs to the bacterial ribosomal protein bS18 family. In terms of assembly, part of the 30S ribosomal subunit.

It localises to the plastid. The protein localises to the chloroplast. This is Small ribosomal subunit protein bS18c from Pleurastrum terricola (Filamentous green alga).